A 119-amino-acid chain; its full sequence is Beta-2-microglobulin (119 aa).

A signal peptide spans 1–20 (MARFVAVALLVLLSLSGLET). One can recognise an Ig-like C1-type domain in the interval 25 to 114 (PKIQVYSRHP…VTFSTPKTVK (90 aa)). Cys45 and Cys100 are joined by a disulfide.

Belongs to the beta-2-microglobulin family. In terms of assembly, heterodimer of an alpha chain and a beta chain. Beta-2-microglobulin is the beta-chain of major histocompatibility complex class I molecules.

It localises to the secreted. In terms of biological role, component of the class I major histocompatibility complex (MHC). Involved in the presentation of peptide antigens to the immune system. The sequence is that of Beta-2-microglobulin (B2M) from Callicebus personatus personatus (Masked titi).